A 505-amino-acid chain; its full sequence is Catalase (505 aa).

The disordered stretch occupies residues 1-25 (MSQQDKKLTGVFGHPVSDRENSMTA). Catalysis depends on residues His-56 and Asn-129. Tyr-339 provides a ligand contact to heme.

This sequence belongs to the catalase family. As to quaternary structure, homodimer. Heme serves as cofactor.

The catalysed reaction is 2 H2O2 = O2 + 2 H2O. In terms of biological role, decomposes hydrogen peroxide into water and oxygen; serves to protect cells from the toxic effects of hydrogen peroxide. This chain is Catalase (katA), found in Staphylococcus aureus (strain MSSA476).